Reading from the N-terminus, the 660-residue chain is Crossover junction endonuclease MUS81 (660 aa).

A Helix-hairpin-helix motif 1 motif is present at residues 62–81 (KDLYQIKGVGKWVIRQLKGS). Low complexity predominate over residues 82–98 (FPESSPDLSPPESNAAG). Residues 82-109 (FPESSPDLSPPESNAAGEKGKKAGGSKR) are disordered. The region spanning 411–506 (LILDDRENFG…RKLIYLVEGD (96 aa)) is the ERCC4 domain. The Helix-hairpin-helix motif 2 signature appears at 586-623 (TVSDVFALQLMQVPQVTEEAALAVIGLYPTLFSLAKAY).

It belongs to the XPF family. Forms a heterodimer with EME1. Interacts with RAD54. Requires Mg(2+) as cofactor. Ca(2+) serves as cofactor. As to expression, low expression in shoots and roots from etiolated seedlings, and panicles after meiosis; moderate expression in young panicles under differentiation of floral organs before and during meiosis; and high expression in mature leaves.

The protein resides in the nucleus. Its function is as follows. Interacts with EME1 to form a DNA structure-specific endonuclease with substrate preference for branched DNA structures with a 5'-end at the branch nick. Typical substrates include 3'-flap structures, D-loops, replication forks, nicked Holliday junctions and also intact Holliday junctions with a reduced efficiency. May be required in mitosis for the processing of stalled or collapsed replication fork intermediates. Plays a role in DNA repair and in genotoxic stress-induced homologous recombination (HR) in somatic cells. Mediates a subset of meiotic recombination events that are insensitive to crossover interference. This is Crossover junction endonuclease MUS81 (MUS81) from Oryza sativa subsp. japonica (Rice).